Here is a 21-residue protein sequence, read N- to C-terminus: thr operon leader peptide (21 aa).

The protein belongs to the thr operon leader peptide family.

Its function is as follows. This protein is involved in control of the biosynthesis of threonine. This Salmonella choleraesuis (strain SC-B67) protein is thr operon leader peptide.